We begin with the raw amino-acid sequence, 548 residues long: mRNA cleavage and polyadenylation factor CLP1 (548 aa).

Residues glutamate 19, lysine 60, and 123–128 (SSGKTT) contribute to the ATP site. Residues 437–481 (ESEVKEEVKEEKNEKDGEIKQDGEGEKKGEGKGEGEGEGEGKYGE) are compositionally biased toward basic and acidic residues. A disordered region spans residues 437–500 (ESEVKEEVKE…DEEEVPFREE (64 aa)). Acidic residues predominate over residues 482–494 (EEGEAEGEDDEEE).

The protein belongs to the Clp1 family. Clp1 subfamily. Component of a pre-mRNA cleavage factor complex. Interacts directly with PCF11.

The protein localises to the nucleus. Its function is as follows. Required for endonucleolytic cleavage during polyadenylation-dependent pre-mRNA 3'-end formation. The protein is mRNA cleavage and polyadenylation factor CLP1 of Cryptococcus neoformans var. neoformans serotype D (strain B-3501A) (Filobasidiella neoformans).